The primary structure comprises 317 residues: MESGNSTRRFSSFFLLGFTENPQLHFLIFALFLSMYLVTVLGNLLIIMAIITQSHLHTPMYFFLANLSFVDICFTSTTIPKMLVNIYTQSKSITYEDCISQMCVFLVFAELGNFLLAVMAYDRYVAXCHPLCYTVIVNHRLCILLLLLSWVISIFHAFIQSLIVLQLTFCGDVKIPHFFCELNQLSQLTCSDNFPSHLIMNLVPVMLAAISFSGILYSYFKIVSSIHSISTVQGKYKAFSTCASHLSIVSLFYSTGLGVYVSSAVVQSSHSAASASVMYTVVTPMLNPFIYSLRNKDVKRALERLLEGNCKVHHWTG.

The Extracellular segment spans residues 1–26 (MESGNSTRRFSSFFLLGFTENPQLHF). Asparagine 5 is a glycosylation site (N-linked (GlcNAc...) asparagine). A helical membrane pass occupies residues 27-51 (LIFALFLSMYLVTVLGNLLIIMAII). Topologically, residues 52–58 (TQSHLHT) are cytoplasmic. A helical membrane pass occupies residues 59–80 (PMYFFLANLSFVDICFTSTTIP). Residues 81–101 (KMLVNIYTQSKSITYEDCISQ) are Extracellular-facing. A disulfide bridge connects residues cysteine 98 and cysteine 190. A helical transmembrane segment spans residues 102-121 (MCVFLVFAELGNFLLAVMAY). Topologically, residues 122–140 (DRYVAXCHPLCYTVIVNHR) are cytoplasmic. Residues 141–159 (LCILLLLLSWVISIFHAFI) traverse the membrane as a helical segment. Residues 160 to 197 (QSLIVLQLTFCGDVKIPHFFCELNQLSQLTCSDNFPSH) are Extracellular-facing. The helical transmembrane segment at 198-220 (LIMNLVPVMLAAISFSGILYSYF) threads the bilayer. At 221 to 237 (KIVSSIHSISTVQGKYK) the chain is on the cytoplasmic side. A helical transmembrane segment spans residues 238 to 261 (AFSTCASHLSIVSLFYSTGLGVYV). Residues 262–273 (SSAVVQSSHSAA) lie on the Extracellular side of the membrane. A helical membrane pass occupies residues 274 to 293 (SASVMYTVVTPMLNPFIYSL). Topologically, residues 294 to 317 (RNKDVKRALERLLEGNCKVHHWTG) are cytoplasmic.

Belongs to the G-protein coupled receptor 1 family. In terms of tissue distribution, olfactory epithelium.

The protein resides in the cell membrane. Functionally, odorant receptor. In Rattus norvegicus (Rat), this protein is Olfactory receptor 1082 (Olr1082).